The primary structure comprises 394 residues: Ceramide glucosyltransferase (394 aa).

Residues 1 to 10 lie on the Lumenal side of the membrane; sequence MALLDLALEG. A helical transmembrane segment spans residues 11 to 32; that stretch reads MAVFGFVLFLVLWLMHFMAIIY. Residues 33–195 lie on the Cytoplasmic side of the membrane; sequence TRLHLNKKAT…QVYFGTSHPR (163 aa). D92 is a short sequence motif (D1). An N6-acetyllysine modification is found at K117. A short sequence motif (D2) is located at residue D144. Residues 196–215 traverse the membrane as a helical segment; it reads YYISANVTGFKCVTGMSCLM. Topologically, residues 216–287 are lumenal; sequence RKDVLDQAGG…KLRINMLPAT (72 aa). D236 is a short sequence motif (D3). The active-site Proton acceptor is the D236. Positions 272-276 match the (Q/R)XXRW motif; it reads RMIRW. A helical transmembrane segment spans residues 288 to 304; the sequence is IICEPISECFVASLIIG. The Cytoplasmic segment spans residues 305 to 309; sequence WAAHH. Residues 310–328 traverse the membrane as a helical segment; the sequence is VFRWDIMVFFMCHCLAWFI. Residues 329–348 are Lumenal-facing; it reads FDYIQLRGVQGGTLCFSKLD. The helical transmembrane segment at 349–369 threads the bilayer; the sequence is YAVAWFIRESMTIYIFLSALW. At 370-394 the chain is on the cytoplasmic side; the sequence is DPTISWRTGRYRLRCGGTAEEILDV.

The protein belongs to the glycosyltransferase 2 family. As to quaternary structure, interacts with RTN1; regulates the ceramide glucosyltransferase activity of UGCG. As to expression, found in all tissues examined.

It localises to the golgi apparatus membrane. The enzyme catalyses an N-acylsphing-4-enine + UDP-alpha-D-glucose = a beta-D-glucosyl-(1&lt;-&gt;1')-N-acylsphing-4-enine + UDP + H(+). The catalysed reaction is UDP-alpha-D-xylose + an N-acylsphing-4-enine = a beta-D-xylosyl-(1&lt;-&gt;1')-N-acylsphing-4-enine + UDP + H(+). It catalyses the reaction N-(9Z-octadecenoyl)-sphing-4-enine + UDP-alpha-D-xylose = beta-D-xylosyl-(1&lt;-&gt;1')-N-(9Z-octadecenoyl)-sphing-4-enine + UDP + H(+). The protein operates within lipid metabolism; sphingolipid metabolism. Participates in the initial step of the glucosylceramide-based glycosphingolipid/GSL synthetic pathway at the cytosolic surface of the Golgi. Catalyzes the transfer of glucose from UDP-glucose to ceramide to produce glucosylceramide/GlcCer (such as beta-D-glucosyl-(1&lt;-&gt;1')-N-acylsphing-4-enine). GlcCer is the core component of glycosphingolipids/GSLs, amphipathic molecules consisting of a ceramide lipid moiety embedded in the outer leaflet of the membrane, linked to one of hundreds of different externally oriented oligosaccharide structures. Glycosphingolipids are essential components of membrane microdomains that mediate membrane trafficking and signal transduction, implicated in many fundamental cellular processes, including growth, differentiation, migration, morphogenesis, cell-to-cell and cell-to-matrix interactions. They are required for instance in the proper development and functioning of the nervous system. As an example of their role in signal transduction, they regulate the leptin receptor/LEPR in the leptin-mediated signaling pathway. They also play an important role in the establishment of the skin barrier regulating keratinocyte differentiation and the proper assembly of the cornified envelope. The biosynthesis of GSLs is also required for the proper intestinal endocytic uptake of nutritional lipids. Catalyzes the synthesis of xylosylceramide/XylCer (such as beta-D-xylosyl-(1&lt;-&gt;1')-N-acylsphing-4-enine) using UDP-Xyl as xylose donor. The sequence is that of Ceramide glucosyltransferase from Homo sapiens (Human).